Reading from the N-terminus, the 257-residue chain is Phosphonates import ATP-binding protein PhnC (257 aa).

An ABC transporter domain is found at 4–248; sequence IEFKNVSKVY…VFSEIYGRTI (245 aa). Residue 37–44 participates in ATP binding; sequence GLSGAGKS.

The protein belongs to the ABC transporter superfamily. Phosphonates importer (TC 3.A.1.9.1) family. As to quaternary structure, the complex is composed of two ATP-binding proteins (PhnC), two transmembrane proteins (PhnE) and a solute-binding protein (PhnD).

The protein localises to the cell membrane. The enzyme catalyses phosphonate(out) + ATP + H2O = phosphonate(in) + ADP + phosphate + H(+). Functionally, part of the ABC transporter complex PhnCDE involved in phosphonates import. Responsible for energy coupling to the transport system. The sequence is that of Phosphonates import ATP-binding protein PhnC from Staphylococcus aureus (strain COL).